A 196-amino-acid polypeptide reads, in one-letter code: Orotate phosphoribosyltransferase (196 aa).

5-phospho-alpha-D-ribose 1-diphosphate is bound by residues Arg-102, Lys-103, Lys-106, His-108, and 129-137; that span reads EDVVTTGGS. Orotate is bound by residues Thr-133 and Arg-161.

The protein belongs to the purine/pyrimidine phosphoribosyltransferase family. PyrE subfamily. As to quaternary structure, homodimer. Mg(2+) serves as cofactor.

The enzyme catalyses orotidine 5'-phosphate + diphosphate = orotate + 5-phospho-alpha-D-ribose 1-diphosphate. It functions in the pathway pyrimidine metabolism; UMP biosynthesis via de novo pathway; UMP from orotate: step 1/2. Its function is as follows. Catalyzes the transfer of a ribosyl phosphate group from 5-phosphoribose 1-diphosphate to orotate, leading to the formation of orotidine monophosphate (OMP). In Prochlorococcus marinus (strain MIT 9303), this protein is Orotate phosphoribosyltransferase.